A 577-amino-acid polypeptide reads, in one-letter code: Protein NRT1/ PTR FAMILY 6.2 (577 aa).

12 helical membrane-spanning segments follow: residues Trp-28–Ile-48, Phe-74–Gly-94, Phe-96–Ala-116, Ile-134–Gly-154, Phe-183–Leu-203, Trp-214–Thr-234, Leu-332–Phe-352, Ile-369–Tyr-389, Leu-409–Val-429, Ile-447–Tyr-467, Gly-488–Val-508, and Trp-535–Phe-555.

This sequence belongs to the major facilitator superfamily. Proton-dependent oligopeptide transporter (POT/PTR) (TC 2.A.17) family. Expressed in shoots, leaves, flowers and siliques. Expressed in leaf petiole.

It is found in the membrane. Its function is as follows. Low-affinity proton-dependent nitrate transporter. Not involved in dipeptides transport. This is Protein NRT1/ PTR FAMILY 6.2 (NPF6.2) from Arabidopsis thaliana (Mouse-ear cress).